Consider the following 249-residue polypeptide: MAIRTQYENSNEVGVFATLTNSYALVSLGSSCNFASVFEAELMPQIPVVQTTIGGTRVVGSVTVGNRKGLLVSSICTDTELRHLRNSLPDSVEIRRIDDRLSALGNVITCNDYVGLIHVDIDRETEEIVEDVLGIEVFRASIAGNVLIGSYCRFQNKGGLVHVKTTTDEMEELSQLLQIPLTSGTVNRGSDVIGGGLIANDWVAFCGMSTTATEIATIERIFQLSRPKEFDPSVSNSHTLRNALIDTLI.

Belongs to the eIF-6 family. Monomer. Associates with the 60S ribosomal subunit.

It localises to the cytoplasm. The protein resides in the nucleus. Its subcellular location is the nucleolus. Binds to the 60S ribosomal subunit and prevents its association with the 40S ribosomal subunit to form the 80S initiation complex in the cytoplasm. May also be involved in ribosome biogenesis. The polypeptide is Eukaryotic translation initiation factor 6 (Babesia bovis).